The chain runs to 106 residues: uncharacterized protein (106 aa).

It is found in the mitochondrion. This is an uncharacterized protein from Arabidopsis thaliana (Mouse-ear cress).